Consider the following 340-residue polypeptide: Cysteinyl leukotriene receptor 1 (340 aa).

The Extracellular portion of the chain corresponds to 1–31 (MDGVRNLTVSCASSNTCNDTIDDFRNQVYST). Residues Asn6 and Asn18 are each glycosylated (N-linked (GlcNAc...) asparagine). A helical transmembrane segment spans residues 32 to 52 (LYSMITVVGFFGNGFVLYVLI). Residues 53-60 (KTYHEKSA) are Cytoplasmic-facing. A helical transmembrane segment spans residues 61-81 (YQVYMINLAVADLLCVCTLPL). At 82-109 (RVVYYVHKGIWLFGDFLCRLSTYALYVN) the chain is on the extracellular side. Cys99 and Cys176 are oxidised to a cystine. The chain crosses the membrane as a helical span at residues 110-130 (LYCSIFFMTAMSFFRCIAIVF). At 131–144 (PVQNINLITHKKAK) the chain is on the cytoplasmic side. The helical transmembrane segment at 145-165 (IVCIAIWIFVILTSSPFLMST) threads the bilayer. At 166 to 196 (SYKDEKNNTKCFEPPQXNQAKYHVLVLHYVS) the chain is on the extracellular side. Asn172 carries N-linked (GlcNAc...) asparagine glycosylation. Residues 197-217 (LFVGFIIPFVIIIVCYTMIIL) traverse the membrane as a helical segment. The Cytoplasmic portion of the chain corresponds to 218-233 (TLLKNSMKKNISSRKK). Residues 234-254 (AIGMIIVVTAAFLISFMPYHI) form a helical membrane-spanning segment. Residues 255 to 279 (QRTIHLHFLHNDTKHCDSVLRMQKS) are Extracellular-facing. Residue Asn265 is glycosylated (N-linked (GlcNAc...) asparagine). Residues 280-300 (VXITLSLAASNCCFDPLLYFF) form a helical membrane-spanning segment. At 301 to 340 (SGGNFREGLSTFRKHSLSTMTYVPKKKTSLPEKAQEIYKE) the chain is on the cytoplasmic side.

Belongs to the G-protein coupled receptor 1 family.

It is found in the cell membrane. Receptor for cysteinyl leukotrienes mediating constriction of the microvascular smooth muscle during an inflammatory response. This response is mediated via a G-protein that activates a phosphatidylinositol-calcium second messenger system. This is Cysteinyl leukotriene receptor 1 (CYSLTR1) from Sus scrofa (Pig).